The chain runs to 210 residues: Neurotrophin-4 (210 aa).

Residues 1–24 (MLPLPSCSLPILLLFLLPSVPIES) form the signal peptide. Residues 25–80 (QPPPSTLPPFLAPEWDLLSPRVVLSRGAPAGPPLLFLLEAGAFRESAGAPANRSRR) constitute a propeptide that is removed on maturation. The N-linked (GlcNAc...) asparagine glycan is linked to N76. 3 disulfide bridges follow: C97–C170, C141–C199, and C158–C201.

The protein belongs to the NGF-beta family. As to expression, highest levels in prostate, lower levels in thymus, placenta, and skeletal muscle. Expressed in embryonic and adult tissues.

It is found in the secreted. Functionally, target-derived survival factor for peripheral sensory sympathetic neurons. May promote ameloblast differentiation and subsequent reduction in proliferation of ameloblasts. The protein is Neurotrophin-4 (NTF4) of Homo sapiens (Human).